The sequence spans 930 residues: uncharacterized protein (930 aa).

Residues 434–441 carry the Nuclear localization signal motif; sequence IRRGISRK.

It localises to the nucleus. This is an uncharacterized protein from Chaetomium thermophilum (strain DSM 1495 / CBS 144.50 / IMI 039719) (Thermochaetoides thermophila).